The following is a 494-amino-acid chain: Acetylcholine receptor subunit epsilon (494 aa).

The N-terminal stretch at 1–20 is a signal peptide; that stretch reads MTMALLGTLLLLALFGRSQG. Over 21–239 the chain is Extracellular; sequence KNEELSLYHH…VIYTLIIRRK (219 aa). N-linked (GlcNAc...) asparagine glycans are attached at residues asparagine 86 and asparagine 161. An intrachain disulfide couples cysteine 148 to cysteine 162. The helical transmembrane segment at 240 to 264 threads the bilayer; it reads PLFYVINIIVPCVLISGLVLLAYFL. The Cytoplasmic portion of the chain corresponds to 265 to 272; that stretch reads PAQAGGQK. Residues 273–291 traverse the membrane as a helical segment; that stretch reads CTVSINVLLAQTVFLFLIA. Over 292–306 the chain is Extracellular; sequence QKIPETSLSVPLLGR. A helical transmembrane segment spans residues 307-328; that stretch reads YLIFVMVVATLIVMNCVIVLNV. The Cytoplasmic segment spans residues 329–457; it reads SLRTPTTHAT…WVRMGKALDN (129 aa). A helical transmembrane segment spans residues 458 to 481; that stretch reads VCFWAALVLFSVGSTLIFLGGYFN. The Extracellular segment spans residues 482 to 494; the sequence is QVPDLPYPPCIQP.

This sequence belongs to the ligand-gated ion channel (TC 1.A.9) family. Acetylcholine receptor (TC 1.A.9.1) subfamily. Epsilon/CHRNE sub-subfamily. Pentamer of two alpha chains, and one each of the beta, delta, and gamma (in immature muscle) or epsilon (in mature muscle) chains. The muscle heteropentamer composed of alpha-1, beta-1, delta, epsilon subunits interacts with the alpha-conotoxin ImII.

It localises to the postsynaptic cell membrane. The protein resides in the cell membrane. It catalyses the reaction K(+)(in) = K(+)(out). It carries out the reaction Na(+)(in) = Na(+)(out). In terms of biological role, after binding acetylcholine, the AChR responds by an extensive change in conformation that affects all subunits and leads to opening of an ion-conducting channel across the plasma membrane. The protein is Acetylcholine receptor subunit epsilon (Chrne) of Rattus norvegicus (Rat).